The chain runs to 374 residues: GTPase Obg (374 aa).

Positions 1-159 (MKFIDEVRIH…RDLRLELRLL (159 aa)) constitute an Obg domain. The OBG-type G domain maps to 160-333 (ADVGLLGLPN…LVYAIWQALP (174 aa)). GTP contacts are provided by residues 166 to 173 (GLPNAGKS), 191 to 195 (FTTLY), 213 to 216 (DIPG), 283 to 286 (NKSD), and 314 to 316 (SAA). Residues Ser173 and Thr193 each coordinate Mg(2+). The tract at residues 337 to 374 (PAADPTQTEDWGDESDAGERLENWEGDDLDADWEEEQV) is disordered. A compositionally biased stretch (acidic residues) spans 360–374 (WEGDDLDADWEEEQV).

The protein belongs to the TRAFAC class OBG-HflX-like GTPase superfamily. OBG GTPase family. Monomer. It depends on Mg(2+) as a cofactor.

The protein localises to the cytoplasm. An essential GTPase which binds GTP, GDP and possibly (p)ppGpp with moderate affinity, with high nucleotide exchange rates and a fairly low GTP hydrolysis rate. Plays a role in control of the cell cycle, stress response, ribosome biogenesis and in those bacteria that undergo differentiation, in morphogenesis control. In Acidithiobacillus ferrooxidans (strain ATCC 23270 / DSM 14882 / CIP 104768 / NCIMB 8455) (Ferrobacillus ferrooxidans (strain ATCC 23270)), this protein is GTPase Obg.